Here is a 405-residue protein sequence, read N- to C-terminus: NADH-quinone oxidoreductase subunit D (405 aa).

It belongs to the complex I 49 kDa subunit family. In terms of assembly, NDH-1 is composed of 14 different subunits. Subunits NuoB, C, D, E, F, and G constitute the peripheral sector of the complex.

The protein localises to the cell inner membrane. It catalyses the reaction a quinone + NADH + 5 H(+)(in) = a quinol + NAD(+) + 4 H(+)(out). In terms of biological role, NDH-1 shuttles electrons from NADH, via FMN and iron-sulfur (Fe-S) centers, to quinones in the respiratory chain. The immediate electron acceptor for the enzyme in this species is believed to be ubiquinone. Couples the redox reaction to proton translocation (for every two electrons transferred, four hydrogen ions are translocated across the cytoplasmic membrane), and thus conserves the redox energy in a proton gradient. This chain is NADH-quinone oxidoreductase subunit D, found in Leptospira interrogans serogroup Icterohaemorrhagiae serovar copenhageni (strain Fiocruz L1-130).